Consider the following 436-residue polypeptide: MGQVLPLVTRQGDRIAIVSGLRTPFARQATAFHGIPAVDLGKMVVGELLARSEIPAEVIEQLVFGQVVQMPEAPNIAREIVLGTGMNVHTDAYSVSRACATSFQAVANVAESLMAGTIRAGIAGGADSSSVLPIGVSKKLARVLVDVNKARTMSQRLKLFSRLRLRDLMPVPPAVAEYSTGLRMGDTAEQMAKTYGITREQQDALAHRSHQRAAQAWSDGKLKEEVMTAFIPPYKQPLAEDNNIRGNSSLADYAKLRPAFDRKHGTVTAANSTPLTDGAAAVILMTESRAKELGLVPLGYLRSYAFTAIDVWQDMLLGPAWSTPLALERAGLTMSDLTLIDMHEAFAAQTLANIQLLGSERFARDVLGRAHATGEVDDSKFNVLGGSIAYGHPFAATGARMITQTLHELRRRGGGFGLVTACAAGGLGAAIVVEAE.

Residue Cys99 is the Acyl-thioester intermediate of the active site. Active-site proton acceptor residues include His392 and Cys422.

Belongs to the thiolase-like superfamily. Thiolase family. As to quaternary structure, heterotetramer of two alpha chains (FadJ) and two beta chains (FadI).

It localises to the cytoplasm. It catalyses the reaction an acyl-CoA + acetyl-CoA = a 3-oxoacyl-CoA + CoA. The protein operates within lipid metabolism; fatty acid beta-oxidation. Its function is as follows. Catalyzes the final step of fatty acid oxidation in which acetyl-CoA is released and the CoA ester of a fatty acid two carbons shorter is formed. The polypeptide is 3-ketoacyl-CoA thiolase (Escherichia coli O6:H1 (strain CFT073 / ATCC 700928 / UPEC)).